Reading from the N-terminus, the 224-residue chain is tRNA pseudouridine synthase B (224 aa).

Aspartate 46 acts as the Nucleophile in catalysis.

Belongs to the pseudouridine synthase TruB family. Type 1 subfamily.

It catalyses the reaction uridine(55) in tRNA = pseudouridine(55) in tRNA. Its function is as follows. Responsible for synthesis of pseudouridine from uracil-55 in the psi GC loop of transfer RNAs. The polypeptide is tRNA pseudouridine synthase B (Methylococcus capsulatus (strain ATCC 33009 / NCIMB 11132 / Bath)).